We begin with the raw amino-acid sequence, 328 residues long: Anthranilate phosphoribosyltransferase (328 aa).

5-phospho-alpha-D-ribose 1-diphosphate is bound by residues Gly-79, 82–83 (GD), Thr-87, 89–92 (NIST), 107–115 (KHGNYAVSS), and Ser-119. Residue Gly-79 participates in anthranilate binding. Residue Ser-91 participates in Mg(2+) binding. Asn-110 is an anthranilate binding site. An anthranilate-binding site is contributed by Arg-165. Mg(2+)-binding residues include Asp-223 and Glu-224.

Belongs to the anthranilate phosphoribosyltransferase family. In terms of assembly, homodimer. Mg(2+) serves as cofactor.

The enzyme catalyses N-(5-phospho-beta-D-ribosyl)anthranilate + diphosphate = 5-phospho-alpha-D-ribose 1-diphosphate + anthranilate. Its pathway is amino-acid biosynthesis; L-tryptophan biosynthesis; L-tryptophan from chorismate: step 2/5. Catalyzes the transfer of the phosphoribosyl group of 5-phosphorylribose-1-pyrophosphate (PRPP) to anthranilate to yield N-(5'-phosphoribosyl)-anthranilate (PRA). This Cytophaga hutchinsonii (strain ATCC 33406 / DSM 1761 / CIP 103989 / NBRC 15051 / NCIMB 9469 / D465) protein is Anthranilate phosphoribosyltransferase.